A 347-amino-acid chain; its full sequence is Holliday junction branch migration complex subunit RuvB (347 aa).

The segment at 4-184 (QDRIVDGHAS…FGIVQRLEFY (181 aa)) is large ATPase domain (RuvB-L). ATP-binding positions include Arg-24, Gly-65, Lys-68, Thr-69, Thr-70, 131 to 133 (EDF), Arg-174, Tyr-184, and Arg-221. Thr-69 lines the Mg(2+) pocket. The tract at residues 185–255 (SVQDLTHIVK…IADSALNMLN (71 aa)) is small ATPAse domain (RuvB-S). The head domain (RuvB-H) stretch occupies residues 258 to 347 (HHGFDHMDRR…SQQQDSLPGI (90 aa)). DNA-binding residues include Arg-294, Arg-313, and Arg-318.

Belongs to the RuvB family. Homohexamer. Forms an RuvA(8)-RuvB(12)-Holliday junction (HJ) complex. HJ DNA is sandwiched between 2 RuvA tetramers; dsDNA enters through RuvA and exits via RuvB. An RuvB hexamer assembles on each DNA strand where it exits the tetramer. Each RuvB hexamer is contacted by two RuvA subunits (via domain III) on 2 adjacent RuvB subunits; this complex drives branch migration. In the full resolvosome a probable DNA-RuvA(4)-RuvB(12)-RuvC(2) complex forms which resolves the HJ.

It is found in the cytoplasm. It catalyses the reaction ATP + H2O = ADP + phosphate + H(+). The RuvA-RuvB-RuvC complex processes Holliday junction (HJ) DNA during genetic recombination and DNA repair, while the RuvA-RuvB complex plays an important role in the rescue of blocked DNA replication forks via replication fork reversal (RFR). RuvA specifically binds to HJ cruciform DNA, conferring on it an open structure. The RuvB hexamer acts as an ATP-dependent pump, pulling dsDNA into and through the RuvAB complex. RuvB forms 2 homohexamers on either side of HJ DNA bound by 1 or 2 RuvA tetramers; 4 subunits per hexamer contact DNA at a time. Coordinated motions by a converter formed by DNA-disengaged RuvB subunits stimulates ATP hydrolysis and nucleotide exchange. Immobilization of the converter enables RuvB to convert the ATP-contained energy into a lever motion, pulling 2 nucleotides of DNA out of the RuvA tetramer per ATP hydrolyzed, thus driving DNA branch migration. The RuvB motors rotate together with the DNA substrate, which together with the progressing nucleotide cycle form the mechanistic basis for DNA recombination by continuous HJ branch migration. Branch migration allows RuvC to scan DNA until it finds its consensus sequence, where it cleaves and resolves cruciform DNA. This chain is Holliday junction branch migration complex subunit RuvB, found in Teredinibacter turnerae (strain ATCC 39867 / T7901).